The primary structure comprises 572 residues: MALSSISIFIHCLVDPLPRKQTSKTLPSNHIDFKSAFNVANWSINQTLVSPLSAQCIHLTDEDVRIKERRTRAFKHILRKEGEGSHEVLAMIDAIQRLGIDHHFQDEIDEILQRQYTIPSYYNDNDLHGLALRFRLLRQGGYNVSAGVFDKFKDKEGNFDQKLSDDIRGLMELYEASQLSIGAEDHILDEAGDYSHQLLSSWMTRLDDSQARIIKNTLDHPHHKNLARFRATNFNRYFHMANIEGWMNELQELAKIDFQMVQSQNQQEIFQVAGWWKDLGISKELKFVRNQPLKWYIWSMATLSDPSLSQQRIDLTKPISFIYIIDDIFDVQGSLDELTLFTEIVKRWDVEAVEQLPGYMRACFKALDSVTNEIGYKVYKQHGWNPVHSLRETWASLCKAFLVEARWFASGHLPAAEEYLQNGIVSSGVHVVLVHIFYLLGHGVTREGVDFIGNRPAIITSTATILRLWDDLGISKDENQDGHDGSYVECYVKEHKGSLVEIATKKVTVMISDAWKQLNQECLHPNPFSPNFTKSCLNLARMVPLMYSYDDNHRLPVLEYYTKSLLFESVSI.

3 residues coordinate Mg(2+): D326, D330, and E478. Residues 326 to 330 (DDIFD) carry the DDXXD motif motif.

Belongs to the terpene synthase family. It depends on Mg(2+) as a cofactor.

Probable sesquiterpene synthase. The protein is Probable terpene synthase 13 (TPS13) of Ricinus communis (Castor bean).